We begin with the raw amino-acid sequence, 106 residues long: Putative cytochrome c oxidase subunit 7A3, mitochondrial (106 aa).

Residues 1–23 (MLWNLLALHQIGQRTISTASHRH) constitute a mitochondrion transit peptide.

It belongs to the cytochrome c oxidase VIIa family.

The protein resides in the mitochondrion inner membrane. The chain is Putative cytochrome c oxidase subunit 7A3, mitochondrial (COX7A2P2) from Homo sapiens (Human).